A 432-amino-acid chain; its full sequence is Trigger factor (432 aa).

In terms of domain architecture, PPIase FKBP-type spans 165-250 (GDFAKIDFEG…LKEIQVKAPQ (86 aa)).

This sequence belongs to the FKBP-type PPIase family. Tig subfamily.

It is found in the cytoplasm. The catalysed reaction is [protein]-peptidylproline (omega=180) = [protein]-peptidylproline (omega=0). Its function is as follows. Involved in protein export. Acts as a chaperone by maintaining the newly synthesized protein in an open conformation. Functions as a peptidyl-prolyl cis-trans isomerase. This chain is Trigger factor, found in Wolinella succinogenes (strain ATCC 29543 / DSM 1740 / CCUG 13145 / JCM 31913 / LMG 7466 / NCTC 11488 / FDC 602W) (Vibrio succinogenes).